Reading from the N-terminus, the 306-residue chain is Phospho-N-acetylmuramoyl-pentapeptide-transferase (306 aa).

The next 10 helical transmembrane spans lie at 2 to 22, 47 to 67, 71 to 91, 105 to 125, 131 to 151, 162 to 182, 185 to 205, 209 to 229, 236 to 256, and 284 to 304; these read IALL…LKYW, SGTP…FLFF, FFIS…DLKL, IFLS…DYKI, LIID…IAVP, GLAG…SFHF, IALE…FNSH, IFMG…LSVV, LIFL…QVFF, and IVWR…VLWY.

Belongs to the glycosyltransferase 4 family. MraY subfamily. Requires Mg(2+) as cofactor.

The protein resides in the cell inner membrane. The catalysed reaction is UDP-N-acetyl-alpha-D-muramoyl-L-alanyl-gamma-D-glutamyl-meso-2,6-diaminopimeloyl-D-alanyl-D-alanine + di-trans,octa-cis-undecaprenyl phosphate = di-trans,octa-cis-undecaprenyl diphospho-N-acetyl-alpha-D-muramoyl-L-alanyl-D-glutamyl-meso-2,6-diaminopimeloyl-D-alanyl-D-alanine + UMP. It participates in cell wall biogenesis; peptidoglycan biosynthesis. Catalyzes the initial step of the lipid cycle reactions in the biosynthesis of the cell wall peptidoglycan: transfers peptidoglycan precursor phospho-MurNAc-pentapeptide from UDP-MurNAc-pentapeptide onto the lipid carrier undecaprenyl phosphate, yielding undecaprenyl-pyrophosphoryl-MurNAc-pentapeptide, known as lipid I. This is Phospho-N-acetylmuramoyl-pentapeptide-transferase from Dictyoglomus thermophilum (strain ATCC 35947 / DSM 3960 / H-6-12).